The chain runs to 168 residues: Protein C2-DOMAIN ABA-RELATED 1 (168 aa).

Met1 carries the N-acetylmethionine modification. Residues 1–104 (MENLVGLLRI…EAIKFAHQLG (104 aa)) form the C2 domain. Residues Arg21, Asp22, Asp27, Asp73, Tyr74, Asp75, and Asp81 each contribute to the Ca(2+) site.

The protein belongs to the plant CAR protein family. In terms of assembly, dimers and oligomers. Binds to PYR/PYL/RCAR abscisic acid intracellular receptors in an ABA-independent manner, both at the plasma membrane and in the nucleus. Interacts directly with PYR1, PYL1, PYL4, PYL6 and PYL8. Binds phospholipids in a Ca(2+)-dependent manner. The cofactor is Ca(2+). As to expression, expressed in roots.

Its subcellular location is the cell membrane. The protein resides in the nucleus. Stimulates the GTPase/ATPase activities of Obg-like ATPases. Mediates the transient calcium-dependent interaction of PYR/PYL/RCAR abscisic acid (ABA) receptors with the plasma membrane and thus regulates ABA sensitivity. Binds liposomes in the absence of exogenous Ca(2+), but this activity is enhanced in the presence of Ca(2+) and generates membrane curvature. This chain is Protein C2-DOMAIN ABA-RELATED 1, found in Arabidopsis thaliana (Mouse-ear cress).